The following is a 248-amino-acid chain: Probable transcriptional regulatory protein OCAR_7305/OCA5_c08120 (248 aa).

Belongs to the TACO1 family.

Its subcellular location is the cytoplasm. The chain is Probable transcriptional regulatory protein OCAR_7305/OCA5_c08120 from Afipia carboxidovorans (strain ATCC 49405 / DSM 1227 / KCTC 32145 / OM5) (Oligotropha carboxidovorans).